Reading from the N-terminus, the 296-residue chain is UPF0761 membrane protein YE0031 (296 aa).

A run of 7 helical transmembrane segments spans residues 44–64 (LLSL…FPMF), 67–87 (ISIK…GDII), 108–128 (GLIV…NIIW), 136–156 (LVFS…LVGA), 185–205 (LFPL…VPTV), 212–232 (ALIG…GFTM), and 246–266 (VLAV…IVLL).

The protein belongs to the UPF0761 family.

It is found in the cell inner membrane. This is UPF0761 membrane protein YE0031 from Yersinia enterocolitica serotype O:8 / biotype 1B (strain NCTC 13174 / 8081).